Here is a 691-residue protein sequence, read N- to C-terminus: Elongation factor G (691 aa).

Residues 8-282 (ERVRNIGIAA…AVVDYLPAPI (275 aa)) enclose the tr-type G domain. Residues 17 to 24 (AHIDAGKT), 81 to 85 (DTPGH), and 135 to 138 (NKMD) contribute to the GTP site.

This sequence belongs to the TRAFAC class translation factor GTPase superfamily. Classic translation factor GTPase family. EF-G/EF-2 subfamily.

Its subcellular location is the cytoplasm. Catalyzes the GTP-dependent ribosomal translocation step during translation elongation. During this step, the ribosome changes from the pre-translocational (PRE) to the post-translocational (POST) state as the newly formed A-site-bound peptidyl-tRNA and P-site-bound deacylated tRNA move to the P and E sites, respectively. Catalyzes the coordinated movement of the two tRNA molecules, the mRNA and conformational changes in the ribosome. This chain is Elongation factor G, found in Prochlorococcus marinus subsp. pastoris (strain CCMP1986 / NIES-2087 / MED4).